Reading from the N-terminus, the 383-residue chain is Plant intracellular Ras-group-related LRR protein 8 (383 aa).

10 LRR repeats span residues 56-79 (RQNIKTLDLSGMSLASLSASSINL), 80-102 (ASISKLDLSNNNIQKIPESLVAR), 104-126 (LNLWALDLQSNQLKTLPNSIGCL), 127-149 (SKLKFLNVSGNYLQSLPKTIEDC), 151-173 (SLEELNANFNELTRLPDAIGFEL), 174-197 (TNLTKLSVNSNKLVLLPNSVSYLT), 199-219 (LRVLDARLNRLSSLPEDLENL), 221-244 (NLQVLNVSQNFQHLTTLPYSVGLL), 245-268 (ISLVELDVSYNGITVLPDSLGCLR), and 270-290 (IQKLSVEGNPLISPPFEVVEQ). Positions 291-298 (GLEALKQY) match the GVYW; degenerate motif.

It belongs to the SHOC2 family. Widely expressed except flowers.

Its function is as follows. Leucine-rich repeat protein that likely mediates protein interactions, possibly in the context of signal transduction. The chain is Plant intracellular Ras-group-related LRR protein 8 (PIRL8) from Arabidopsis thaliana (Mouse-ear cress).